Reading from the N-terminus, the 370-residue chain is tRNA-specific 2-thiouridylase MnmA (370 aa).

ATP-binding positions include 24-31 (AMSGGVDS) and L50. Catalysis depends on C118, which acts as the Nucleophile. An intrachain disulfide couples C118 to C214. G142 serves as a coordination point for ATP. The segment at 164 to 166 (KDQ) is interaction with tRNA. C214 (cysteine persulfide intermediate) is an active-site residue.

This sequence belongs to the MnmA/TRMU family.

The protein resides in the cytoplasm. The enzyme catalyses S-sulfanyl-L-cysteinyl-[protein] + uridine(34) in tRNA + AH2 + ATP = 2-thiouridine(34) in tRNA + L-cysteinyl-[protein] + A + AMP + diphosphate + H(+). Catalyzes the 2-thiolation of uridine at the wobble position (U34) of tRNA, leading to the formation of s(2)U34. The protein is tRNA-specific 2-thiouridylase MnmA of Ehrlichia ruminantium (strain Gardel).